Consider the following 397-residue polypeptide: MWKNRKIDWLILGPYLALSIVGLLEIYSASSYRLLVAGSDPKSLFIRQFLFIILSWGVIVLTYSIRLQVLLKPRIIKAGLIVSGLLLAMMKLGIFAVTVNGAQRWVSIAGIQFQPSEIATIFLILYLSRFFRNDRSVPEKLHIPVLIVGGIAVLVLFQPKIAGALMILAIAGAIFWAAAIPIKKGLIIIGAAIASLILVAGLVLLLEKHHLLPSFFEHAYDRIAMVHNPFLDEHGAGYQMSNSYYALYNGGLFGRGMGNSITKKGYLPESETDFIFSVIAEEFGLIGALLVLFLLFLLCMRIFQKSTKQKNQQANLILIGVGTWILVQTSINIGSILGLIPMTGVPLPFVSYGGTSYLILSFAIGLALNISSRQVKEKNKQVERLQLKKPKLLNKNN.

The Cytoplasmic portion of the chain corresponds to Met1–Lys6. The chain crosses the membrane as a helical span at residues Ile7–Tyr27. Over Ser28–Leu44 the chain is Extracellular. Residues Phe45 to Ile65 traverse the membrane as a helical segment. Residues Arg66–Ala78 lie on the Cytoplasmic side of the membrane. Residues Gly79–Val99 traverse the membrane as a helical segment. The Extracellular portion of the chain corresponds to Asn100–Arg104. The helical transmembrane segment at Trp105–Leu125 threads the bilayer. At Tyr126–Ser136 the chain is on the cytoplasmic side. A helical membrane pass occupies residues Val137–Phe157. Topologically, residues Gln158–Lys160 are extracellular. Residues Ile161–Pro181 traverse the membrane as a helical segment. At Ile182 to Gly185 the chain is on the cytoplasmic side. Residues Leu186–Leu206 form a helical membrane-spanning segment. The Extracellular portion of the chain corresponds to Glu207–Ser277. Residues Val278–Leu298 form a helical membrane-spanning segment. Residues Cys299–Asn315 are Cytoplasmic-facing. Residues Leu316–Ile336 form a helical membrane-spanning segment. The Extracellular portion of the chain corresponds to Leu337 to Pro346. A helical transmembrane segment spans residues Leu347–Ala367. Over Leu368–Asn397 the chain is Cytoplasmic.

It belongs to the SEDS family. FtsW subfamily.

Its subcellular location is the cell membrane. The catalysed reaction is [GlcNAc-(1-&gt;4)-Mur2Ac(oyl-L-Ala-gamma-D-Glu-L-Lys-D-Ala-D-Ala)](n)-di-trans,octa-cis-undecaprenyl diphosphate + beta-D-GlcNAc-(1-&gt;4)-Mur2Ac(oyl-L-Ala-gamma-D-Glu-L-Lys-D-Ala-D-Ala)-di-trans,octa-cis-undecaprenyl diphosphate = [GlcNAc-(1-&gt;4)-Mur2Ac(oyl-L-Ala-gamma-D-Glu-L-Lys-D-Ala-D-Ala)](n+1)-di-trans,octa-cis-undecaprenyl diphosphate + di-trans,octa-cis-undecaprenyl diphosphate + H(+). It functions in the pathway cell wall biogenesis; peptidoglycan biosynthesis. Functionally, peptidoglycan polymerase that is essential for cell division. The sequence is that of Probable peptidoglycan glycosyltransferase FtsW (ftsW) from Enterococcus hirae.